A 51-amino-acid chain; its full sequence is Cytochrome b559 subunit beta (51 aa).

Residues 26-42 form a helical membrane-spanning segment; it reads WLAVHALTVPTIFFLGA. H30 lines the heme pocket.

This sequence belongs to the PsbE/PsbF family. Heterodimer of an alpha subunit and a beta subunit. PSII is composed of 1 copy each of membrane proteins PsbA, PsbB, PsbC, PsbD, PsbE, PsbF, PsbH, PsbI, PsbJ, PsbK, PsbL, PsbM, PsbT, PsbX, Psb30/Ycf12, peripheral proteins PsbO, CyanoQ (PsbQ), PsbU, PsbV and a large number of cofactors. It forms dimeric complexes. The cofactor is heme b.

The protein localises to the cell inner membrane. In terms of biological role, this b-type cytochrome is tightly associated with the reaction center of photosystem II (PSII). PSII is a light-driven water:plastoquinone oxidoreductase that uses light energy to abstract electrons from H(2)O, generating O(2) and a proton gradient subsequently used for ATP formation. It consists of a core antenna complex that captures photons, and an electron transfer chain that converts photonic excitation into a charge separation. This is Cytochrome b559 subunit beta from Gloeobacter violaceus (strain ATCC 29082 / PCC 7421).